Consider the following 766-residue polypeptide: Pumilio domain-containing protein 12 (766 aa).

2 disordered regions span residues 63 to 98 (KKSS…KSKK) and 152 to 197 (AQEE…GDES). A compositionally biased stretch (polar residues) spans 79–88 (SLCSESSFGS). Acidic residues predominate over residues 179–193 (PADDENLESVDEQAG). In terms of domain architecture, PUM-HD spans 245–602 (ARAQKCKELW…LYAGITENLY (358 aa)). Pumilio repeat units lie at residues 313 to 348 (ELTP…IIIN), 461 to 496 (SLKD…LIVK), 497 to 534 (NFKD…VIVS), and 535 to 571 (ELAN…REIT).

The sequence is that of Pumilio domain-containing protein 12 (puf-12) from Caenorhabditis elegans.